A 220-amino-acid chain; its full sequence is Germin-like protein subfamily 2 member 4 (220 aa).

Residues 1 to 21 (MDSRCFGFFFTLLSLNVIVLA) form the signal peptide. Residues cysteine 31 and cysteine 46 are joined by a disulfide bond. Asparagine 51 and asparagine 69 each carry an N-linked (GlcNAc...) asparagine glycan. In terms of domain architecture, Cupin type-1 spans 58–209 (FFAGIGKPAV…TFQIGTKEIE (152 aa)). Positions 108, 110, 115, and 154 each coordinate Mn(2+).

It belongs to the germin family. As to quaternary structure, oligomer (believed to be a pentamer but probably hexamer).

The protein localises to the secreted. The protein resides in the extracellular space. It is found in the apoplast. In terms of biological role, may play a role in plant defense. Probably has no oxalate oxidase activity even if the active site is conserved. This is Germin-like protein subfamily 2 member 4 (GLP10) from Arabidopsis thaliana (Mouse-ear cress).